The following is a 494-amino-acid chain: Anthranilate synthase component 1 (494 aa).

Residues Ser-50 and 276-278 contribute to the L-tryptophan site; that span reads PYM. Chorismate is bound at residue 311 to 312; that stretch reads GT. Position 338 (Glu-338) interacts with Mg(2+). Chorismate contacts are provided by residues Tyr-426, Arg-446, 460–462, and Gly-462; that span reads GAG. Glu-475 is a Mg(2+) binding site.

This sequence belongs to the anthranilate synthase component I family. As to quaternary structure, heterotetramer consisting of two non-identical subunits: a beta subunit (TrpG) and a large alpha subunit (TrpE). Mg(2+) serves as cofactor.

It catalyses the reaction chorismate + L-glutamine = anthranilate + pyruvate + L-glutamate + H(+). It participates in amino-acid biosynthesis; L-tryptophan biosynthesis; L-tryptophan from chorismate: step 1/5. With respect to regulation, feedback inhibited by tryptophan. In terms of biological role, part of a heterotetrameric complex that catalyzes the two-step biosynthesis of anthranilate, an intermediate in the biosynthesis of L-tryptophan. In the first step, the glutamine-binding beta subunit (TrpG) of anthranilate synthase (AS) provides the glutamine amidotransferase activity which generates ammonia as a substrate that, along with chorismate, is used in the second step, catalyzed by the large alpha subunit of AS (TrpE) to produce anthranilate. In the absence of TrpG, TrpE can synthesize anthranilate directly from chorismate and high concentrations of ammonia. This is Anthranilate synthase component 1 (trpE) from Acetivibrio thermocellus (Hungateiclostridium thermocellum).